The primary structure comprises 73 residues: Adipokinetic prohormone type 2 (73 aa).

The first 20 residues, 1–20 (MCRIFIVLLVVAALAIIIEG), serve as a signal peptide directing secretion. Pyrrolidone carboxylic acid is present on Gln21. Asn30 carries the asparagine amide modification. The propeptide occupies 34–73 (SISSEQINDDCNPEEAIFQIYKLIVSEGERIRACQRDGKM).

In terms of tissue distribution, expressed in corpora cardiaca (CC), corpora allata (CA) and gnathal ganglion (GNG) (at protein level). Expression in CC and CA detected in all animals, expression in GNG detected in few animals (at protein level). Not expressed in antennal lobe (AL) (at protein level).

It localises to the secreted. Functionally, this hormone, released from cells in the corpora cardiaca, causes release of diglycerides from the fat body and stimulation of muscles to use these diglycerides as an energy source during energy-demanding processes. The sequence is that of Adipokinetic prohormone type 2 from Agrotis ipsilon (Black cutworm moth).